We begin with the raw amino-acid sequence, 177 residues long: ADP-ribosylation factor-like protein 3 (177 aa).

Gly2 carries N-myristoyl glycine lipidation. GTP is bound by residues 23-31 (GLDNAGKTT), 125-128 (NKQD), and Ala159.

It belongs to the small GTPase superfamily. Arf family.

It localises to the golgi apparatus membrane. It is found in the cytoplasm. Its subcellular location is the cytoskeleton. The protein localises to the spindle. The protein resides in the nucleus. It localises to the microtubule organizing center. Functionally, small GTP-binding protein which cycles between an inactive GDP-bound and an active GTP-bound form, and the rate of cycling is regulated by guanine nucleotide exchange factors (GEF) and GTPase-activating proteins (GAP). Required for normal cytokinesis and cilia signaling. Required for targeting proteins to the ciliary membrane by releasing myristoylated protein from unc119 cargo adapters into the cilium. The sequence is that of ADP-ribosylation factor-like protein 3 from Chlamydomonas reinhardtii (Chlamydomonas smithii).